Reading from the N-terminus, the 1221-residue chain is Phosphoenolpyruvate carboxylase 2 (1221 aa).

Histidine 156 is a catalytic residue. Disordered stretches follow at residues 443-588 and 642-661; these read TAAE…DPTF and REPA…GGGG. Low complexity-rich tracts occupy residues 503-513 and 550-564; these read TTTATAAAAAA and PFRE…TAAS. Composition is skewed to gly residues over residues 565 to 575 and 648 to 661; these read GGAGGGGGGGA and AHGG…GGGG. Lysine 886 is an active-site residue.

The protein belongs to the PEPCase type 1 family. The cofactor is Mg(2+).

Its subcellular location is the cytoplasm. The catalysed reaction is oxaloacetate + phosphate = phosphoenolpyruvate + hydrogencarbonate. Through the carboxylation of phosphoenolpyruvate (PEP) it forms oxaloacetate, a four-carbon dicarboxylic acid source for the tricarboxylic acid cycle. The chain is Phosphoenolpyruvate carboxylase 2 from Chlamydomonas reinhardtii (Chlamydomonas smithii).